Consider the following 668-residue polypeptide: GTP-binding protein 1 (668 aa).

The disordered stretch occupies residues 1 to 32; sequence MAAERSRSPVDSPVPASMFAPEPSSPGAARAA. A phosphoserine mark is found at Ser-6, Ser-8, Ser-12, Ser-24, Ser-25, Ser-44, Ser-47, and Ser-69. One can recognise a tr-type G domain in the interval 158–389; the sequence is FLEVRVAVVG…LNLLSPRTSY (232 aa). Positions 167 to 174 are G1; it reads GNVDAGKS. GTP is bound at residue 167-174; the sequence is GNVDAGKS. Positions 206–210 are G2; that stretch reads GRTSS. Residues 252 to 255 form a G3 region; sequence DLAG. GTP contacts are provided by residues 252-256 and 308-311; these read DLAGH and TKID. The segment at 308–311 is G4; sequence TKID. Residues 366–368 are G5; it reads SNV. Residues 573–595 show a composition bias toward polar residues; that stretch reads LLQTTNNSPMNSKPQQIKMQSTK. The disordered stretch occupies residues 573 to 668; sequence LLQTTNNSPM…GACVTPASGC (96 aa). Ser-580 is modified (phosphoserine). Over residues 609 to 619 the composition is skewed to low complexity; sequence GVPAAGGPPTG. The segment covering 624–637 has biased composition (polar residues); it reads SLGTAQAASTSGLQ. A compositionally biased stretch (basic residues) spans 646–657; the sequence is GRRRGGQRHKVK.

Belongs to the TRAFAC class translation factor GTPase superfamily. Classic translation factor GTPase family. GTPBP1 subfamily. In terms of assembly, interacts with EXOSC2/RRP4, EXOSC3/RRP40, EXOSC5/RRP46, HNRNPD, HNRNPR and SYNCRIP. Identified in a complex with AANAT mRNA, but does not bind mRNA by itself. In terms of tissue distribution, detected in some neurons in the brain cortex. Detected in small arteries, dendritic cells and macrophages in the thymus. Detected in lung bronchi, in bronchial epithelial cells and in bronchial smooth muscle cells. Detected in smooth muscle cells in a broad range of organs (at protein level). Expressed in brain, thymus, lung, and kidney.

The protein localises to the cytoplasm. Its function is as follows. Promotes degradation of target mRNA species. Plays a role in the regulation of circadian mRNA stability. Binds GTP and has GTPase activity. In Mus musculus (Mouse), this protein is GTP-binding protein 1 (Gtpbp1).